Here is a 369-residue protein sequence, read N- to C-terminus: Probable dual-specificity RNA methyltransferase RlmN (369 aa).

Residue Glu-108 is the Proton acceptor of the active site. The Radical SAM core domain occupies 114 to 357; that stretch reads YPDRATVCIS…CTVRDTRGQE (244 aa). Cys-121 and Cys-362 are disulfide-bonded. [4Fe-4S] cluster is bound by residues Cys-128, Cys-132, and Cys-135. Residues 183 to 184, Ser-217, 240 to 242, and Asn-319 contribute to the S-adenosyl-L-methionine site; these read GE and SLH. The active-site S-methylcysteine intermediate is Cys-362.

This sequence belongs to the radical SAM superfamily. RlmN family. It depends on [4Fe-4S] cluster as a cofactor.

It localises to the cytoplasm. The catalysed reaction is adenosine(2503) in 23S rRNA + 2 reduced [2Fe-2S]-[ferredoxin] + 2 S-adenosyl-L-methionine = 2-methyladenosine(2503) in 23S rRNA + 5'-deoxyadenosine + L-methionine + 2 oxidized [2Fe-2S]-[ferredoxin] + S-adenosyl-L-homocysteine. It carries out the reaction adenosine(37) in tRNA + 2 reduced [2Fe-2S]-[ferredoxin] + 2 S-adenosyl-L-methionine = 2-methyladenosine(37) in tRNA + 5'-deoxyadenosine + L-methionine + 2 oxidized [2Fe-2S]-[ferredoxin] + S-adenosyl-L-homocysteine. Its function is as follows. Specifically methylates position 2 of adenine 2503 in 23S rRNA and position 2 of adenine 37 in tRNAs. The protein is Probable dual-specificity RNA methyltransferase RlmN of Saccharopolyspora erythraea (strain ATCC 11635 / DSM 40517 / JCM 4748 / NBRC 13426 / NCIMB 8594 / NRRL 2338).